A 168-amino-acid polypeptide reads, in one-letter code: Endoribonuclease YbeY (168 aa).

Positions 132, 136, and 142 each coordinate Zn(2+).

This sequence belongs to the endoribonuclease YbeY family. The cofactor is Zn(2+).

It is found in the cytoplasm. Its function is as follows. Single strand-specific metallo-endoribonuclease involved in late-stage 70S ribosome quality control and in maturation of the 3' terminus of the 16S rRNA. The sequence is that of Endoribonuclease YbeY from Clostridium perfringens (strain ATCC 13124 / DSM 756 / JCM 1290 / NCIMB 6125 / NCTC 8237 / Type A).